The following is a 220-amino-acid chain: Aspartic protease inhibitor 5 (220 aa).

A signal peptide spans 1-23; it reads MMKCLFLLCLCLLPIVVFSSTFT. Residues 24-32 constitute a propeptide that is removed on maturation; the sequence is SQNLIDLPS. The short motif at 26 to 31 is the Vacuolar targeting signal element; it reads NLIDLP. Asn-51 carries an N-linked (GlcNAc...) asparagine glycan. 2 disulfides stabilise this stretch: Cys-80–Cys-125 and Cys-174–Cys-185.

Belongs to the protease inhibitor I3 (leguminous Kunitz-type inhibitor) family.

The protein resides in the vacuole. Inhibitor of cathepsin D (aspartic protease). May also inhibit trypsin and chymotrypsin (serine proteases). Protects the plant by inhibiting proteases of invading organisms. The chain is Aspartic protease inhibitor 5 from Solanum tuberosum (Potato).